Reading from the N-terminus, the 270-residue chain is Phosphatidylglycerol--prolipoprotein diacylglyceryl transferase (270 aa).

A run of 7 helical transmembrane segments spans residues 14–34 (VIFEIGPIGLRWYGLMYLLGF), 60–80 (LLFNGFMGVFLGGRIGYVLFY), 95–115 (VWEGGMSFHGGLIGVILAMLI), 128–148 (ADFVAPLIPFGLGMGRIGNFI), 176–196 (SQLYEAVLEGIVLFFILNWYI), 202–222 (IGATAGLFLLGYGIFRFIVEF), and 238–258 (ISMGQILSTPMILIGAVIMLV). R143 lines the a 1,2-diacyl-sn-glycero-3-phospho-(1'-sn-glycerol) pocket.

The protein belongs to the Lgt family.

It localises to the cell inner membrane. It catalyses the reaction L-cysteinyl-[prolipoprotein] + a 1,2-diacyl-sn-glycero-3-phospho-(1'-sn-glycerol) = an S-1,2-diacyl-sn-glyceryl-L-cysteinyl-[prolipoprotein] + sn-glycerol 1-phosphate + H(+). It functions in the pathway protein modification; lipoprotein biosynthesis (diacylglyceryl transfer). In terms of biological role, catalyzes the transfer of the diacylglyceryl group from phosphatidylglycerol to the sulfhydryl group of the N-terminal cysteine of a prolipoprotein, the first step in the formation of mature lipoproteins. This is Phosphatidylglycerol--prolipoprotein diacylglyceryl transferase from Pasteurella multocida (strain Pm70).